Reading from the N-terminus, the 719-residue chain is MLLFVEVTSKGTGLNPNAKVWQEIPSGNPDGTPVTEPSWHETAATSGSHPEGHTELSEDMCKEYEVMYSPSCETTRNTADVEESADGMILGPEDLSYQLYDVSGESSSAISTEDLKECLKKQLEFCFSRENLSKDLYLISQMDSDQFVPIWTVANMEEIKKLTTNTDLILEVLRSSPMVQVDEKGEKVRPSHKRCIVILREIPETTPVEEVKALFKNENCPKVISCEFAHNSNWYITFQSDTDAQQAFKYLREEVKTFQGKPIMARIKAINTFFAKNGYRLMDSSMYTQPIQTPTQYPSPVFMQPVYNPQQYSVYSLVPQSWSPSPAPYFETPLAPFPNGSFVDGFSSPGSYKTNAAAMNMGRPFPKNRVKPHFRSSSGSEHSTEGSVSLGDGPLSRSSSRIFLSERHNPTVTGQQEQTYLPKEAPILQMEQNGDFGRGRRTLFRGRRRRDDDRIPRPQPAATEAKAPTPKFDLLATNFPPLPGSSSRVPDELGLENRMSDVVKGVCREKDSEDVRVSCPVPAEDGQTDCTSAPLSISPSPPCTAEPPVLSTTQQEQDQMEDSAVPKDTLNPVAVPVSSPTATKPSPANTASPCTSNINPPRAVALQEPRKLSYAEVCQKPPKEPSPVLVQPLRELRSNAVSPTRNEENGAPEKPVEKPHEKPETRASKDHSGFRGNTIPRGAAGKIREQRRQFSHRATPQGVTRRNGKEQYVPPRSPK.

The residue at position 1 (M1) is an N-acetylmethionine. An interaction with PABPC1 region spans residues 12 to 21 (TGLNPNAKVW). The segment at 21 to 55 (WQEIPSGNPDGTPVTEPSWHETAATSGSHPEGHTE) is disordered. Residues 107 to 299 (SSAISTEDLK…PIQTPTQYPS (193 aa)) form an interaction with the poly-A tract of mRNA region. In terms of domain architecture, HTH La-type RNA-binding spans 109 to 198 (AISTEDLKEC…RPSHKRCIVI (90 aa)). Residues 199 to 277 (LREIPETTPV…KAINTFFAKN (79 aa)) enclose the RRM domain. R363 bears the Omega-N-methylarginine mark. Disordered stretches follow at residues 363-398 (RPFPKNRVKPHFRSSSGSEHSTEGSVSLGDGPLSRS) and 437-470 (GRGRRTLFRGRRRRDDDRIPRPQPAATEAKAPTP). Positions 376–389 (SSSGSEHSTEGSVS) are enriched in low complexity. A phosphoserine mark is found at S387 and S396. The span at 439-448 (GRRTLFRGRR) shows a compositional bias: basic residues. A compositionally biased stretch (low complexity) spans 460–470 (PAATEAKAPTP). Residue S500 is modified to Phosphoserine. 2 stretches are compositionally biased toward polar residues: residues 529-538 (DCTSAPLSIS) and 578-599 (SSPTATKPSPANTASPCTSNIN). 3 disordered regions span residues 529–562 (DCTSAPLSISPSPPCTAEPPVLSTTQQEQDQMED), 576–601 (PVSSPTATKPSPANTASPCTSNINPP), and 615–719 (AEVC…RSPK). Phosphoserine occurs at positions 578, 592, and 642. The residue at position 644 (T644) is a Phosphothreonine. Positions 654 to 673 (KPVEKPHEKPETRASKDHSG) are enriched in basic and acidic residues. R681 carries the omega-N-methylarginine modification. At S717 the chain carries Phosphoserine.

Interacts (via N-terminal region) with PABPC1. Interacts with RACK1.

The protein localises to the cytoplasm. It localises to the stress granule. It is found in the cytosol. RNA binding protein that binds to the poly-A tract of mRNA molecules. Associates with the 40S ribosomal subunit and with polysomes. Plays a role in the regulation of mRNA translation. Plays a role in the regulation of cell morphology and cytoskeletal organization. This chain is La-related protein 4 (Larp4), found in Mus musculus (Mouse).